A 451-amino-acid polypeptide reads, in one-letter code: UPF0210 protein CLL_A1718 (451 aa).

It belongs to the UPF0210 family. Homodimer.

The polypeptide is UPF0210 protein CLL_A1718 (Clostridium botulinum (strain Eklund 17B / Type B)).